A 325-amino-acid chain; its full sequence is Tetraacyldisaccharide 4'-kinase (325 aa).

Position 55-62 (55-62) interacts with ATP; that stretch reads TAGGNGKT.

Belongs to the LpxK family.

It carries out the reaction a lipid A disaccharide + ATP = a lipid IVA + ADP + H(+). Its pathway is glycolipid biosynthesis; lipid IV(A) biosynthesis; lipid IV(A) from (3R)-3-hydroxytetradecanoyl-[acyl-carrier-protein] and UDP-N-acetyl-alpha-D-glucosamine: step 6/6. In terms of biological role, transfers the gamma-phosphate of ATP to the 4'-position of a tetraacyldisaccharide 1-phosphate intermediate (termed DS-1-P) to form tetraacyldisaccharide 1,4'-bis-phosphate (lipid IVA). The polypeptide is Tetraacyldisaccharide 4'-kinase (Cronobacter sakazakii (strain ATCC BAA-894) (Enterobacter sakazakii)).